A 61-amino-acid polypeptide reads, in one-letter code: Large ribosomal subunit protein uL30 (61 aa).

Belongs to the universal ribosomal protein uL30 family. As to quaternary structure, part of the 50S ribosomal subunit.

In Parafrankia sp. (strain EAN1pec), this protein is Large ribosomal subunit protein uL30.